The chain runs to 320 residues: Cytochrome f (320 aa).

The first 35 residues, 1–35, serve as a signal peptide directing secretion; the sequence is MQTINTFSWIKEQITRSISISLILYIITRSSIANA. Heme is bound by residues tyrosine 36, cysteine 56, cysteine 59, and histidine 60. The chain crosses the membrane as a helical span at residues 286–305; sequence IQGLLFFFASVILAQIFLVL.

It belongs to the cytochrome f family. As to quaternary structure, the 4 large subunits of the cytochrome b6-f complex are cytochrome b6, subunit IV (17 kDa polypeptide, petD), cytochrome f and the Rieske protein, while the 4 small subunits are PetG, PetL, PetM and PetN. The complex functions as a dimer. Heme serves as cofactor.

Its subcellular location is the plastid. It localises to the chloroplast thylakoid membrane. Component of the cytochrome b6-f complex, which mediates electron transfer between photosystem II (PSII) and photosystem I (PSI), cyclic electron flow around PSI, and state transitions. The polypeptide is Cytochrome f (petA) (Spinacia oleracea (Spinach)).